The sequence spans 116 residues: Subtilisin inhibitor-like protein 4 (116 aa).

2 disulfides stabilise this stretch: cysteine 38–cysteine 53 and cysteine 74–cysteine 104.

The protein belongs to the protease inhibitor I16 (SSI) family. Homodimer.

The protein resides in the secreted. Its function is as follows. Inhibitor of subtilisin BPN' and trypsin. This chain is Subtilisin inhibitor-like protein 4, found in Streptomyces lavendulae.